The primary structure comprises 111 residues: Secreted transmembrane peptide 5 (111 aa).

The first 46 residues, 1–46 (MRLSVFYIFITRLAMTKNATKNEMGSKSPNIVALVLPLLLILYTLS), serve as a signal peptide directing secretion. Residues 66 to 79 (IVWTPHSNSCGGSP) carry the SCOOP motif motif. A SxS motif essential for MIK2 binding motif is present at residues 72–74 (SNS). The interval 89 to 111 (TTGRPCRRSRPPGTNIPVSDQSP) is disordered.

This sequence belongs to the serine rich endogenous peptide (SCOOP) phytocytokine family. As to quaternary structure, interacts with MIK2 (via extracellular leucine-rich repeat domain); this interaction triggers the formation of complex between MIK2 and the BAK1/SERK3 and SERK4 coreceptors, and subsequent BAK1 activation by phosphorylation. As to expression, mostly expressed in leaves, and, to a lower extent, in roots, stems, siliques, seeds and flowers.

The protein resides in the cell membrane. It localises to the secreted. It is found in the extracellular space. The protein localises to the apoplast. Functionally, brassicaceae-specific phytocytokine (plant endogenous peptide released into the apoplast) perceived by MIK2 in a BAK1/SERK3 and SERK4 coreceptors-dependent manner, that modulates various physiological and antimicrobial processes including growth prevention and reactive oxygen species (ROS) response regulation. The protein is Secreted transmembrane peptide 5 of Arabidopsis thaliana (Mouse-ear cress).